We begin with the raw amino-acid sequence, 59 residues long: Large ribosomal subunit protein uL30 (59 aa).

Belongs to the universal ribosomal protein uL30 family. As to quaternary structure, part of the 50S ribosomal subunit.

The chain is Large ribosomal subunit protein uL30 from Staphylococcus aureus (strain JH1).